The chain runs to 610 residues: Protein Smaug homolog 1 (610 aa).

Serine 67 carries the post-translational modification Phosphoserine. Disordered regions lie at residues 177-222 (ARGP…EEGS), 318-366 (SSPS…LQPP), and 464-487 (NRGF…GRRN). Positions 222–295 (SGMKDVPAWL…LKSLERDIIE (74 aa)) constitute an SAM domain. Position 319 is a phosphoserine (serine 319). A Phosphothreonine modification is found at threonine 323. The segment covering 344 to 358 (SAATVTSATASASAG) has biased composition (low complexity). The residue at position 465 (arginine 465) is an Omega-N-methylarginine. A compositionally biased stretch (polar residues) spans 467–480 (FGQSNSLPTASSVG). Serine 472 carries the phosphoserine modification.

The protein belongs to the SMAUG family. As to expression, expressed in brain (at protein level).

It is found in the cytoplasm. The protein resides in the cell projection. The protein localises to the dendrite. It localises to the synapse. Its subcellular location is the synaptosome. Its function is as follows. Acts as a translational repressor of SRE-containing messengers. In Rattus norvegicus (Rat), this protein is Protein Smaug homolog 1 (Samd4a).